Reading from the N-terminus, the 344-residue chain is Mitogen-activated protein kinase mpkC (344 aa).

One can recognise a Protein kinase domain in the interval 19 to 298; that stretch reads YANVQPVGLG…AETALQHPYL (280 aa). Residues 25–33 and lysine 48 contribute to the ATP site; that span reads VGLGAFGLV. Aspartate 140 functions as the Proton acceptor in the catalytic mechanism. Threonine 170 bears the Phosphothreonine mark. The TXY motif lies at 170–172; it reads TGY. Tyrosine 172 carries the post-translational modification Phosphotyrosine.

This sequence belongs to the protein kinase superfamily. Ser/Thr protein kinase family. MAP kinase subfamily. HOG1 sub-subfamily. Requires Mg(2+) as cofactor. Post-translationally, dually phosphorylated on Thr-170 and Tyr-172, which activates the enzyme.

It carries out the reaction L-seryl-[protein] + ATP = O-phospho-L-seryl-[protein] + ADP + H(+). It catalyses the reaction L-threonyl-[protein] + ATP = O-phospho-L-threonyl-[protein] + ADP + H(+). Activated by tyrosine and threonine phosphorylation. Functionally, mitogen-activated protein kinase required for growth on media where sorbitol or mannitol is the sole carbon source. The protein is Mitogen-activated protein kinase mpkC (mpkC) of Aspergillus oryzae (strain ATCC 42149 / RIB 40) (Yellow koji mold).